The chain runs to 289 residues: UPF0276 protein BB1291 (289 aa).

The protein belongs to the UPF0276 family.

The polypeptide is UPF0276 protein BB1291 (Bordetella bronchiseptica (strain ATCC BAA-588 / NCTC 13252 / RB50) (Alcaligenes bronchisepticus)).